The sequence spans 322 residues: Mas-related G-protein coupled receptor member X3 (322 aa).

The Extracellular portion of the chain corresponds to 1 to 31; that stretch reads MDSTIPVLGTELTPINGREETPCYKQTLSFT. Residues 32–52 form a helical membrane-spanning segment; it reads GLTCIVSLVALTGNAVVLWLL. The Cytoplasmic segment spans residues 53–60; sequence GCRMRRNA. The chain crosses the membrane as a helical span at residues 61-81; it reads VSIYILNLVAADFLFLSGHII. Residues 82-96 lie on the Extracellular side of the membrane; sequence CSPLRLINIRHPISK. A helical transmembrane segment spans residues 97–117; that stretch reads ILSPVMTFPYFIGLSMLSAIS. At 118 to 140 the chain is on the cytoplasmic side; the sequence is TERCLSILWPIWYHCRRPRYLSS. Residues 141 to 161 traverse the membrane as a helical segment; the sequence is VMCVLLWALSLLRSILEWMFC. Residues 162 to 177 are Extracellular-facing; sequence DFLFSGANSVWCETSD. The chain crosses the membrane as a helical span at residues 178 to 198; it reads FITIAWLVFLCVVLCGSSLVL. The Cytoplasmic portion of the chain corresponds to 199 to 213; that stretch reads LVRILCGSRKMPLTR. Residues 214 to 234 form a helical membrane-spanning segment; that stretch reads LYVTILLTVLVFLLCGLPFGI. Topologically, residues 235–254 are extracellular; that stretch reads QWALFSRIHLDWKVLFCHVH. The helical transmembrane segment at 255–275 threads the bilayer; that stretch reads LVSIFLSALNSSANPIIYFFV. At 276–322 the chain is on the cytoplasmic side; the sequence is GSFRQRQNRQNLKLVLQRALQDTPEVDEGGGWLPQETLELSGSRLEQ.

This sequence belongs to the G-protein coupled receptor 1 family. Mas subfamily. In terms of tissue distribution, uniquely localized in a subset of small dorsal root and trigeminal sensory neurons.

The protein resides in the cell membrane. Its function is as follows. Orphan receptor. Probably involved in the function of nociceptive neurons. May regulate nociceptor function and/or development, including the sensation or modulation of pain. Potently activated by enkephalins. The chain is Mas-related G-protein coupled receptor member X3 (MRGPRX3) from Homo sapiens (Human).